Reading from the N-terminus, the 293-residue chain is Nucleotide-binding protein LBA0691 (293 aa).

Position 13-20 (13-20 (GMSGAGKT)) interacts with ATP. Residue 63 to 66 (DLRV) coordinates GTP.

It belongs to the RapZ-like family.

Displays ATPase and GTPase activities. The sequence is that of Nucleotide-binding protein LBA0691 from Lactobacillus acidophilus (strain ATCC 700396 / NCK56 / N2 / NCFM).